A 789-amino-acid polypeptide reads, in one-letter code: Polyribonucleotide nucleotidyltransferase (789 aa).

Residues Asp494 and Asp500 each coordinate Mg(2+). Residues 561-620 (PRIESIFINKDKIRNVIGSGGKNIREICEKTGARVEIMQDGTVMIYAINNDAVEYAKNMI) enclose the KH domain. Positions 630–697 (GKVFDGTVIE…DREYVQLSMR (68 aa)) constitute an S1 motif domain. Residues 709 to 789 (GELYNIRKTN…NEVPRKPRFF (81 aa)) are disordered. Positions 737–749 (SEKKRRGSGRSRR) are enriched in basic residues. The segment covering 763-780 (NNGFGNGNRSFNDNRNGN) has biased composition (low complexity).

This sequence belongs to the polyribonucleotide nucleotidyltransferase family. It depends on Mg(2+) as a cofactor.

It is found in the cytoplasm. The enzyme catalyses RNA(n+1) + phosphate = RNA(n) + a ribonucleoside 5'-diphosphate. Functionally, involved in mRNA degradation. Catalyzes the phosphorolysis of single-stranded polyribonucleotides processively in the 3'- to 5'-direction. The polypeptide is Polyribonucleotide nucleotidyltransferase (Ehrlichia ruminantium (strain Gardel)).